We begin with the raw amino-acid sequence, 3198 residues long: MNEGNSAGGGHEGLSPAPPAVPDRVTPHSTEISVAPANSTSTTVRAAGSVGAALPATRHHQHIATQVKGIASSSSKQQKQLASAQLPVPLSPLPQQQQQTAEATAAAAAPAHSNVSVSSSTIEASVLPPQAKRQRLDDNEDRTSAASIVGPAESSNIVSSLLPASVASSSEVGGLSSTALQDLNALKKRILQQKLQILRNLKERHLENVSEYFYLQNGGSMMDYPAWRKKTPTPQFISYSNANRIDQLIHEDKPSTSAAAAAAQNQKYTTQQTDSVESSLVSGIGTGATKGAPLDGNISNSTVKTNTQSQVPSKIGSFTESTPAATESNSSTTVPGTATSGAATSTSATSAEASGNVLAVEAEIKIPAVGATPVAISTKLPAAVVQLTQQGGTPLLPCNTSAGSTALRRPQGQNNASSGSAAASGGGGSLTPTPLYTGNGPAALGGSGGLTPGTPTSGSLLSPALGGGSGTPNSAAQEFSFKAKQEVYVMQRISELQREGLWTERRLPKLQEPSRPKAHWDYLLEEMVWLAADFAQERKWKKNAAKKCAKMVQKYFQDKATAAQRAEKAQELQLKRVASFIAREVKSFWSNVEKLVEYKHQTKIEEKRKQALDQHLSFIVDQTEKFSQQLVEGMNKSVADTPSLNSSRLTSPKRESDDDFRPESGSEDDEETIAKAEEDAADVKEEVTALAKESEMDFDDFLNDLPPGYLENRDKLMKEEQSSAIKTETPDDSDDSEFEAKEASDDDENTISKQEEAEQEIDHKKEIDELEADNDLSVEQLLAKYKSEQPPSPKRRKLAPRDPELDSDDDSTAVDSTEESEDAATEDEEDLSTVKTDTDMEEQDEQEDGLKSLMADADATSGAAGSGSTAGASGNKDDMLNDAAALAESLQPKGNTLSSTNVVTPVPFLLKHSLREYQHIGLDWLVTMNERKLNGILADEMGLGKTIQTIALLAHLACAKGNWGPHLIVVPSSVMLNWEMEFKKWCPGFKILTYYGSQKERKLKRVGWTKPNAFHVCITSYKLVVQDQQSFRRKKWKYLILDEAQNIKNFKSQRWQLLLNFSTERRLLLTGTPLQNDLMELWSLMHFLMPYVFSSHREFKEWFSNPMTGMIEGNMEYNETLITRLHKVIRPFLLRRLKKEVEKQMPKKYEHVITCRLSNRQRYLYEDFMSRAKTRETLQTGNLLSVINVLMQLRKVCNHPNMFEARPTISPFQMDGITFHTPRLVCDIMEYDPFTQINLETLNLLLLHLEQTMTAYVSHKSRLLAPPRKLIEDIDTAPLPAPRCPNGKYRFHIRVRSAELAQRIKLNAVKVGASPAMRLEGSKIMPMRNLLPSGRVLKRVSASINPVNMALKPVVINSVVTTTSSSTTASSPTGALSVLSNSKLLGARSQINAPTPAKVAKTMQDGKPFFYLTPATNSGAAGARLTLTSKTTASASTTTSRTTVTASTTSGQQLIRDPIVKDLATHVKSTVQKQSIANGKTEPEEETEAEDPYKVQELIQMRKEQRLAALKRMAMINRRRTDATPIYGEDCREAIQRCMQATRSLKRSTWQTRGYANCCTAMAHRNGWSLNHLLKSFEERCADLKPVFANFVIYVPSVCAPRIRRYVQNLSSTHWQHEQRIENIVDQALRPKLALLHPIISEMTTKFPDPRLIQYDCGKLQTMDRLLRQLKVNGHRVLIFTQMTKMLDVLEAFLNYHGHIYLRLDGSTRVEQRQILMERFNGDKRIFCFILSTRSGGVGINLTGADTVIFYDSDWNPTMDAQAQDRCHRIGQTRDVHIYRLVSERTIEVNILKKANQKRMLSDMAIEGGNFTTTYFKSSTIKDLFTMEQSEQDESSQEKSENKDRIVATTTLSDTPSTVVETEKQSLRAFEHALAAAEDEQDVQATKTAKAEVAADLAEFDENIPIATEDPNAEGGPQVELSKADLEMQNLVKQLSPIERYAMRFVEETGAAWTAEQLRAAEAELEAQKREWEANRLAAMHKEEELLKQETEAEEMLTYSRKDSSNQVWISRNTMEQMPMWCPPTPPQDNDNDIYIDYSLSFMYELEPIAETDLPPVYVRKEHKRSRTDAGYDGSRRPNKMRREDNYVPPRSLFDRPTPQLARLRRELKSQRFRGSFKPNMPIPGLKPQLPTKPLTEPEAMAEWCVFEDMAILHVLVNLQGLPCSLMLLSPGQTPNWDLVSEMVNFCSKTYRSARQCRWRYETHIQPREEGKVVESPKKQKKLKPTLRTEYLKSPLRYLRTTQLYVSDNNASFYKTMRSRFDSIKTAYLKKAPPPKRQFSAPSLMNPKHMEVLQEFGILNYDQPVSPQNIAAMKANKIREKQRGQQMSQPPVGVGVVQQMQQQSQQQQQPAPPPLPQQQQPQQVVQQVQQQQQQQQQQQQQQVVQQQLPTVSNVQQTLPVQQTVELVQQQPTTTTTVAVPAAGGQLQQLQIQHLTSSNVSPGQQTAILLHQPQQQLRTHPGQGGQSNTQQLVKTIVGTSSSLTAGQLQQLAQQSAVASGGQSSVSVVLTTPVQTLPSVVQPQIGSGAQIVSISSQTLPVNSSPQLGSIVQTQSLPQVVSVSTLPTVGTVLTTTANQPQQQHQTTAVTTLNTTMLRGQRIVSTAAGNTLQQRTTAGGQSIVSMPNLGQGASPSQFQTQLRLAAVPTSPATQTTQLVTTKGIPVSALQQGGKTTVIPVTQQSGGAHIQLYRQRSLKVLQTTTQAVPSGSAGATGATANLVQAGGTIIQASNMATHVTSQKVAVSGMPGTSTTVQAGNVVSSVQMHGQARTQFIKQMAAGKQQLQRQVVSADGTTTTTAAGDMLLVKRHNILAAQKAQQASGALFTTTTGQQQQQQQQQGQLPVAGQPQQVTQHQIASLVKASTAAAASGSSVNAGGVTVSATNPTVQAGSVNMTLPQLKPGSQIKVTMPNQMRHLQMQQQLTMPRKISRMTQLVSASGQPTATNIITTTGPQQQQQGVTVSGGGTLPTVASQQQQQQHQQKVGGGNSVQAQLLHIQNTKGLSNSVTMQQIQQVMRSGQQGTLATTNLVLGKTSVGRVIPVSVASQANQRQTIQVVSAASAQALAAGNLRTHVAGPSIASTLKVAAPGSAGGQTTQQTLIAALQHNQRQNASPVRLQTTAGGNLLAVVQQQQQQQHTSIAGPTAGPAEVMTITQTTTTLPTVGSLQQQQQQQQQQGGISQPTTQQVRKLVQKKILIRSEKE.

Positions Met1–Glu12 are enriched in gly residues. Disordered stretches follow at residues Met1–Pro27, Leu93–His112, and Ser119–Ile148. Residues Gln134–Thr143 are compositionally biased toward basic and acidic residues. Residues Lys187–Tyr212 are a coiled coil. 2 disordered regions span residues Thr256–Ser350 and Gly391–Ser474. Composition is skewed to polar residues over residues Gln264 to Val281 and Asn297 to Asn329. Over residues Ser330–Ser350 the composition is skewed to low complexity. The segment covering Gly391–Ser404 has biased composition (polar residues). Low complexity predominate over residues Pro452–Ala464. The 73-residue stretch at Leu507–Ser579 folds into the HSA domain. Positions Asn635–Asp848 are disordered. A compositionally biased stretch (polar residues) spans Val638–Thr650. Positions Pro652–Ser664 are enriched in basic and acidic residues. Residues Ser656, Ser664, and Ser666 each carry the phosphoserine modification. Residues Ser666–Met696 are a coiled coil. 2 stretches are compositionally biased toward basic and acidic residues: residues Thr672–Glu695 and Glu711–Gln721. Residue Thr729 is modified to Phosphothreonine. Ser733, Ser736, and Ser744 each carry phosphoserine. Positions Lys741–Lys784 form a coiled coil. A compositionally biased stretch (basic and acidic residues) spans Lys753 to Ile767. Residues Leu805–Leu831 are compositionally biased toward acidic residues. A Phosphothreonine modification is found at Thr838. Residues Val926 to Tyr1091 enclose the Helicase ATP-binding domain. Asp939–Thr946 contacts ATP. Residues Val1471–Pro1492 form a disordered region. The 151-residue stretch at Thr1662–Thr1812 folds into the Helicase C-terminal domain. The disordered stretch occupies residues Glu1828–Pro1856. The segment covering Ser1836–Ile1846 has biased composition (basic and acidic residues). Residues Ala1951–Met1996 are a coiled coil. Residues Lys2061–Gln2100 are disordered. Over residues Arg2067–Asn2086 the composition is skewed to basic and acidic residues. A Myb-like domain is found at Thr2136 to Ile2205. The disordered stretch occupies residues Ile2318–Gln2362. Over residues Gln2325–Gln2349 the composition is skewed to low complexity.

The protein belongs to the SNF2/RAD54 helicase family. SWR1 subfamily. As to quaternary structure, component of the Tip60 chromatin-remodeling complex which contains Domino, Tip60, Tra1, Brd8, E(Pc), DMAP1, Pontin, Reptin, Ing3, Act87E, BAP55, Mrg15, MrgBP, Gas41 and YL-1. Isoform B is present at high levels in ovary, in follicle cells, nurse cells and oocyte. Isoform B is also present in germline and somatic stem cells from the germarium. Isoform A is undetectable in adult ovary (at protein level).

It localises to the nucleus. In terms of biological role, mediates the ATP-dependent exchange of unmodified histone H2AV for its phosphorylated and acetylated form H2AVK5acS138ph, leading to transcriptional regulation of selected genes by chromatin remodeling. Involved in Notch signaling. Represses E2F target genes. Required for somatic stem cell self-renewal but not for germline stem cell self-renewal. Involved in oogenesis. The polypeptide is Helicase domino (dom) (Drosophila melanogaster (Fruit fly)).